The chain runs to 328 residues: DNA-directed RNA polymerase subunit alpha (328 aa).

The tract at residues 1-231 (MIYQMQMPAK…EHVAFFADFS (231 aa)) is alpha N-terminal domain (alpha-NTD). An alpha C-terminal domain (alpha-CTD) region spans residues 252-328 (MRKLLNTKIE…MDITKYQMKG (77 aa)).

It belongs to the RNA polymerase alpha chain family. As to quaternary structure, homodimer. The RNAP catalytic core consists of 2 alpha, 1 beta, 1 beta' and 1 omega subunit. When a sigma factor is associated with the core the holoenzyme is formed, which can initiate transcription.

The enzyme catalyses RNA(n) + a ribonucleoside 5'-triphosphate = RNA(n+1) + diphosphate. In terms of biological role, DNA-dependent RNA polymerase catalyzes the transcription of DNA into RNA using the four ribonucleoside triphosphates as substrates. In Chlorobium phaeovibrioides (strain DSM 265 / 1930) (Prosthecochloris vibrioformis (strain DSM 265)), this protein is DNA-directed RNA polymerase subunit alpha.